A 21-amino-acid polypeptide reads, in one-letter code: Helicopsin (21 aa).

It belongs to the CRISP family. In terms of processing, contains 8 disulfide bonds. In terms of tissue distribution, expressed by the salivary gland.

It localises to the secreted. Its function is as follows. Helicopsin exhibits robust neurotoxic activity as shown by immediate death (about 8 minutes) of mice due to respiratory paralysis. The sequence is that of Helicopsin from Helicops angulatus (South American water snake).